Consider the following 849-residue polypeptide: SMY2 homolog 2 (849 aa).

The region spanning 149–205 is the GYF domain; the sequence is ESQWKYIDSNGNIQGPFGTNNMSQWYQGGYFTPTLQICRLATSPEPFGVNDRFIRLG. Disordered stretches follow at residues 305-505, 527-547, 593-612, and 634-661; these read APLS…TTNL, DLKK…QLDR, TKIN…IKPD, and NRAS…NTSN. The span at 308 to 318 shows a compositional bias: low complexity; that stretch reads STTSSRSNKTT. The segment covering 319–331 has biased composition (basic and acidic residues); that stretch reads SSHEEKVPSHEEA. Residue threonine 350 is modified to Phosphothreonine. 3 stretches are compositionally biased toward basic and acidic residues: residues 361-375, 387-403, and 425-443; these read TKQE…KEQN, VDRK…KSKD, and LLEE…EEQR. Residues 410-484 are a coiled coil; it reads EEQKRFAKAE…EKQKELLNNI (75 aa). The span at 444 to 455 shows a compositional bias: basic residues; that stretch reads KLKKEKKLKQKQ. Basic and acidic residues predominate over residues 456–479; it reads KKEEEKLKKKKKEEGKLEKEKQKE. Polar residues predominate over residues 483-505; sequence NILTGDTETPSSENTATSITTNL. Residues 594–605 show a composition bias toward polar residues; the sequence is KINSQSKINKAN. Positions 644-661 are enriched in low complexity; sequence SRTPSPSSSALNSSNTSN.

The protein belongs to the SMY2/mpd2 family. Interacts with ribosomes. Interacts with EAP1 and MSL5 (via the GYP domain).

The protein resides in the cytoplasm. The chain is SMY2 homolog 2 (SYH1) from Saccharomyces cerevisiae (strain ATCC 204508 / S288c) (Baker's yeast).